We begin with the raw amino-acid sequence, 130 residues long: Small ribosomal subunit protein uS9 (130 aa).

The protein belongs to the universal ribosomal protein uS9 family.

The chain is Small ribosomal subunit protein uS9 from Stenotrophomonas maltophilia (strain R551-3).